Reading from the N-terminus, the 347-residue chain is uncharacterized protein (347 aa).

It is found in the cytoplasm. It localises to the nucleus. This is an uncharacterized protein from Schizosaccharomyces pombe (strain 972 / ATCC 24843) (Fission yeast).